Reading from the N-terminus, the 369-residue chain is MSTAAPILLTPGPLTTSARTRQAMMVDWGSWDDRFNQLTASLCEQLLAILNGADSHHCVPLQGSGTFAVEAAIGTLVPRDGKVLVLINGAYGKRLAKICEVLGRSFSTFETAEDEPTTAADVDRLLCADSDITHVALIHCETSTGILNPLPEIAQVVEQHGKRLIIDAMSSFGALPVDAQKVPFDALIAASGKCLEGVPGMGFVFARKESLAAAAGNSHSLAMDLFDQHSYMKKTGQWRFTPPTHVVAALHEALLQYNEEGGLPARHARYAANCQALMEEMGKLGLRSFLPAAIQAPIIATFHAPKDPRYQFKDFYERVKAKGYILYPGKLTQVETFRVGCIGHVTPAQMREAVAAVSEVLREMEVLDI.

The residue at position 193 (lysine 193) is an N6-(pyridoxal phosphate)lysine.

Belongs to the class-V pyridoxal-phosphate-dependent aminotransferase family. PhnW subfamily. In terms of assembly, homodimer. Pyridoxal 5'-phosphate serves as cofactor.

The catalysed reaction is (2-aminoethyl)phosphonate + pyruvate = phosphonoacetaldehyde + L-alanine. Functionally, involved in phosphonate degradation. This chain is 2-aminoethylphosphonate--pyruvate transaminase, found in Pseudomonas fluorescens (strain Pf0-1).